Reading from the N-terminus, the 271-residue chain is Phosphate import ATP-binding protein PstB (271 aa).

In terms of domain architecture, ABC transporter spans V13 to I266. Residue G57–S64 participates in ATP binding.

Belongs to the ABC transporter superfamily. Phosphate importer (TC 3.A.1.7) family. The complex is composed of two ATP-binding proteins (PstB), two transmembrane proteins (PstC and PstA) and a solute-binding protein (PstS).

The protein resides in the cell inner membrane. It carries out the reaction phosphate(out) + ATP + H2O = ADP + 2 phosphate(in) + H(+). Its function is as follows. Part of the ABC transporter complex PstSACB involved in phosphate import. Responsible for energy coupling to the transport system. This is Phosphate import ATP-binding protein PstB from Thermus thermophilus (strain ATCC 27634 / DSM 579 / HB8).